The primary structure comprises 166 residues: Large ribosomal subunit protein uL10 (166 aa).

The protein belongs to the universal ribosomal protein uL10 family. Part of the ribosomal stalk of the 50S ribosomal subunit. The N-terminus interacts with L11 and the large rRNA to form the base of the stalk. The C-terminus forms an elongated spine to which L12 dimers bind in a sequential fashion forming a multimeric L10(L12)X complex.

In terms of biological role, forms part of the ribosomal stalk, playing a central role in the interaction of the ribosome with GTP-bound translation factors. The polypeptide is Large ribosomal subunit protein uL10 (Hydrogenovibrio crunogenus (strain DSM 25203 / XCL-2) (Thiomicrospira crunogena)).